We begin with the raw amino-acid sequence, 322 residues long: Cytochrome f (322 aa).

The first 36 residues, 1–36 (MQKNRNTFSWVKEQMTRCISVSMMIYVITRASISNA), serve as a signal peptide directing secretion. Heme is bound by residues Y37, C57, C60, and H61. Residues 288 to 308 (IQGLLFFLASVILAQIFLVLK) form a helical membrane-spanning segment.

The protein belongs to the cytochrome f family. The 4 large subunits of the cytochrome b6-f complex are cytochrome b6, subunit IV (17 kDa polypeptide, petD), cytochrome f and the Rieske protein, while the 4 small subunits are PetG, PetL, PetM and PetN. The complex functions as a dimer. Requires heme as cofactor.

It is found in the plastid. It localises to the chloroplast thylakoid membrane. In terms of biological role, component of the cytochrome b6-f complex, which mediates electron transfer between photosystem II (PSII) and photosystem I (PSI), cyclic electron flow around PSI, and state transitions. The chain is Cytochrome f from Nymphaea alba (White water-lily).